We begin with the raw amino-acid sequence, 461 residues long: Inositol-trisphosphate 3-kinase A (461 aa).

Residues 1–29 (MTLPGGPTGMARPGGARPCSPGLERAPRR) form a disordered region. Positions 1–133 (MTLPGGPTGM…SVSSTGSSSL (133 aa)) are required for cytoskeleton location. Omega-N-methylarginine is present on residues arginine 35, arginine 55, and arginine 62. A disordered region spans residues 49–160 (AAAGEPRARG…GNVQLEAGED (112 aa)). Low complexity predominate over residues 118–134 (RRLSTSSVSSTGSSSLL). A phosphoserine mark is found at serine 137 and serine 197. ATP contacts are provided by residues serine 197, lysine 209, 249–251 (QDL), and aspartate 262. The substrate site is built by lysine 264 and arginine 285. Positions 287–295 (DMYKKMLAV) are calmodulin-binding. 312–319 (KPRYMQWR) contributes to the substrate binding site. Residues lysine 336 and aspartate 416 each contribute to the ATP site. Substrate is bound at residue lysine 419.

The protein belongs to the inositol phosphokinase (IPK) family. Expressed in brain.

The protein localises to the cytoplasm. It localises to the cytoskeleton. The enzyme catalyses 1D-myo-inositol 1,4,5-trisphosphate + ATP = 1D-myo-inositol 1,3,4,5-tetrakisphosphate + ADP + H(+). With respect to regulation, activated by calcium/calmodulin. In terms of biological role, catalyzes the phosphorylation of 1D-myo-inositol 1,4,5-trisphosphate (InsP3) into 1D-myo-inositol 1,3,4,5-tetrakisphosphate and participates to the regulation of calcium homeostasis. The sequence is that of Inositol-trisphosphate 3-kinase A from Homo sapiens (Human).